The sequence spans 646 residues: UvrABC system protein C (646 aa).

Residues 16 to 95 (VEPGVYRFRD…IKEFDPRFNV (80 aa)) enclose the GIY-YIG domain. The UVR domain maps to 208–243 (DRFARALEQQMNAAAEQLDFERAARLRDDLSALKRA).

The protein belongs to the UvrC family. As to quaternary structure, interacts with UvrB in an incision complex.

It is found in the cytoplasm. Functionally, the UvrABC repair system catalyzes the recognition and processing of DNA lesions. UvrC both incises the 5' and 3' sides of the lesion. The N-terminal half is responsible for the 3' incision and the C-terminal half is responsible for the 5' incision. This chain is UvrABC system protein C, found in Mycobacterium bovis (strain BCG / Pasteur 1173P2).